The chain runs to 108 residues: UPF0102 protein Sfri_0388 (108 aa).

This sequence belongs to the UPF0102 family.

This is UPF0102 protein Sfri_0388 from Shewanella frigidimarina (strain NCIMB 400).